A 186-amino-acid chain; its full sequence is Elongation factor P (186 aa).

Belongs to the elongation factor P family.

It localises to the cytoplasm. The protein operates within protein biosynthesis; polypeptide chain elongation. Involved in peptide bond synthesis. Stimulates efficient translation and peptide-bond synthesis on native or reconstituted 70S ribosomes in vitro. Probably functions indirectly by altering the affinity of the ribosome for aminoacyl-tRNA, thus increasing their reactivity as acceptors for peptidyl transferase. The polypeptide is Elongation factor P (Prochlorococcus marinus (strain SARG / CCMP1375 / SS120)).